Reading from the N-terminus, the 397-residue chain is Protein shisa-8 (397 aa).

Residues 1-38 form the signal peptide; the sequence is MARAGARGLLGGRRPPGLRLALALRLALLLARPPSGRA. Residues 39-138 lie on the Extracellular side of the membrane; the sequence is GAPEAQGPAA…APRDPGRERS (100 aa). Asn75 carries an N-linked (GlcNAc...) asparagine glycan. The interval 117–136 is disordered; it reads TGRPPARARDTAAPRDPGRE. The span at 123–136 shows a compositional bias: basic and acidic residues; it reads RARDTAAPRDPGRE. The helical transmembrane segment at 139-159 threads the bilayer; sequence HTAVYAVCGVAALLVLAGIGA. The Cytoplasmic segment spans residues 160–397; sequence RLGLERAHSP…RTNSKTEVTV (238 aa). Disordered regions lie at residues 182–250 and 281–303; these read LLKQ…GGSL and FPALEPSPRQPPARAPRPSPDLP. 2 stretches are compositionally biased toward pro residues: residues 188–197 and 288–303; these read PQEPLPPTLG and PRQPPARAPRPSPDLP.

Belongs to the shisa family. Interacts with AMPAR subunits GRIA1 and GRIA2.

It localises to the membrane. Its function is as follows. May regulate trafficking and current kinetics of AMPA-type glutamate receptor (AMPAR) at synapses. The protein is Protein shisa-8 of Homo sapiens (Human).